We begin with the raw amino-acid sequence, 450 residues long: Divalent metal cation transporter MntH (450 aa).

11 helical membrane-spanning segments follow: residues 44-64 (LLAF…PGNW), 77-97 (TLLS…SLAA), 121-141 (FLLW…EVIG), 152-172 (IPLI…LLLM), 181-201 (AFVI…IVAA), 218-238 (IFTN…TVMP), 273-293 (IALM…AATF), 310-330 (LLSP…ALLA), 366-386 (GIAI…GTAD), 387-407 (LLVF…IPLV), and 419-439 (FAIS…IVVL).

Belongs to the NRAMP family.

The protein localises to the cell inner membrane. H(+)-stimulated, divalent metal cation uptake system. This chain is Divalent metal cation transporter MntH, found in Bradyrhizobium diazoefficiens (strain JCM 10833 / BCRC 13528 / IAM 13628 / NBRC 14792 / USDA 110).